A 467-amino-acid chain; its full sequence is UDP-N-acetylmuramoylalanine--D-glutamate ligase (467 aa).

118-124 (GTNGKTT) is an ATP binding site.

The protein belongs to the MurCDEF family.

The protein localises to the cytoplasm. It carries out the reaction UDP-N-acetyl-alpha-D-muramoyl-L-alanine + D-glutamate + ATP = UDP-N-acetyl-alpha-D-muramoyl-L-alanyl-D-glutamate + ADP + phosphate + H(+). Its pathway is cell wall biogenesis; peptidoglycan biosynthesis. Functionally, cell wall formation. Catalyzes the addition of glutamate to the nucleotide precursor UDP-N-acetylmuramoyl-L-alanine (UMA). This chain is UDP-N-acetylmuramoylalanine--D-glutamate ligase, found in Streptomyces avermitilis (strain ATCC 31267 / DSM 46492 / JCM 5070 / NBRC 14893 / NCIMB 12804 / NRRL 8165 / MA-4680).